The chain runs to 194 residues: Serine/threonine-protein kinase mos (194 aa).

The 148-residue stretch at 47–194 (LCLLHLLGSG…HLDLKPANIF (148 aa)) folds into the Protein kinase domain. ATP contacts are provided by residues 53 to 61 (LGSGGFGSV) and Lys-74. Asp-187 (proton acceptor) is an active-site residue.

The protein belongs to the protein kinase superfamily. Ser/Thr protein kinase family.

The enzyme catalyses L-seryl-[protein] + ATP = O-phospho-L-seryl-[protein] + ADP + H(+). It catalyses the reaction L-threonyl-[protein] + ATP = O-phospho-L-threonyl-[protein] + ADP + H(+). This Atheris squamigera (Variable bush viper) protein is Serine/threonine-protein kinase mos (MOS).